We begin with the raw amino-acid sequence, 182 residues long: A-type ATP synthase subunit E (182 aa).

Belongs to the V-ATPase E subunit family. Has multiple subunits with at least A(3), B(3), C, D, E, F, H, I and proteolipid K(x).

It is found in the cell membrane. Its function is as follows. Component of the A-type ATP synthase that produces ATP from ADP in the presence of a proton gradient across the membrane. This Methanothrix thermoacetophila (strain DSM 6194 / JCM 14653 / NBRC 101360 / PT) (Methanosaeta thermophila) protein is A-type ATP synthase subunit E.